Here is a 292-residue protein sequence, read N- to C-terminus: MSEIRLYVTTTESKAEEILDLLSAVFGEEDFAIGTTEIDEKEDIWEASIYMMAEDEAEVHSRVEDALKASFPNARLEREVIPDVDWVVKSLEGLKPVRAGRFLVHGSHDRDKVRPGDIAIEIDAGQAFGTGHHGTTAGCLEAIDAVVRSRPVRNALDLGTGSGVLAIAVRKLKNIPVLATDIDPIATRVAAENVRRNGIASGIVTRTAPGFHSTAFSEHGPFDLIIANILARPLIRMAPKLATHLAPGGSVILSGILATQRWKVIAAYSGARLRHVRTIWRNGWVTIHFDRP.

4 residues coordinate S-adenosyl-L-methionine: threonine 136, glycine 159, aspartate 181, and asparagine 228.

Belongs to the methyltransferase superfamily. PrmA family.

The protein resides in the cytoplasm. The catalysed reaction is L-lysyl-[protein] + 3 S-adenosyl-L-methionine = N(6),N(6),N(6)-trimethyl-L-lysyl-[protein] + 3 S-adenosyl-L-homocysteine + 3 H(+). In terms of biological role, methylates ribosomal protein L11. The sequence is that of Ribosomal protein L11 methyltransferase from Rhizobium leguminosarum bv. trifolii (strain WSM2304).